The sequence spans 403 residues: Envelope glycoprotein D (403 aa).

Residues 1 to 34 form the signal peptide; it reads MNRYRYESIFFRYISSTRMILIICLLLGIGDMSA. The Virion surface portion of the chain corresponds to 35–357; the sequence is MGLKKDNSPI…ISTEKKSRTQ (323 aa). N-linked (GlcNAc...) asparagine; by host glycans are attached at residues asparagine 87 and asparagine 138. 3 disulfides stabilise this stretch: cysteine 88–cysteine 209, cysteine 127–cysteine 222, and cysteine 139–cysteine 148. 2 N-linked (GlcNAc...) asparagine; by host glycosylation sites follow: asparagine 230 and asparagine 306. The chain crosses the membrane as a helical span at residues 358–378; sequence IIISLVVLCVMFCFIVIGSGI. The Intravirion segment spans residues 379 to 403; that stretch reads WILRKHRKTVMYDRRRPSRRAYSRL.

This sequence belongs to the herpesviridae glycoprotein D family.

It localises to the virion membrane. Its function is as follows. Envelope glycoprotein that binds to host cell entry receptors, promoting the virus entry into host cells. May trigger fusion with host membrane, by recruiting the fusion machinery composed of gB and gH/gL. This Gallus gallus (Chicken) protein is Envelope glycoprotein D (MDV094).